Consider the following 341-residue polypeptide: MAKVYYNGDANEKYLQSKTVAIIGYGSQGHAHAQNLRDSGVNVIVGLRKGKSWEQAEKDGFAVYSVREATKQADIVMVLLPDEKQPNVYKEEIEPELQPGNALVFAHGFNIHFNQIVPPEHVDVFLVAPKGPGHLVRRTYTEGAGVPALIAVYQDVTGEAKQTALAYAKAIGATRAGVLETTFKEETETDLFGEQAVLCGGLTSLIKAGFETLVEAGYQPEVAYFECLHEMKLIVDLLYEGGLSWMRHSISDTAQWGDFISGPRIINDAVKAEMKKVLHDIQTGKFAKGWILENQANRPEFNAINRRENEHLIEIVGRELRSMMPFVKEKQKEVVVSSAKN.

A KARI N-terminal Rossmann domain is found at 2–181 (AKVYYNGDAN…GATRAGVLET (180 aa)). Residues 25–28 (YGSQ), R48, S52, and 82–85 (DEKQ) each bind NADP(+). H107 is an active-site residue. An NADP(+)-binding site is contributed by G133. Residues 182-327 (TFKEETETDL…RELRSMMPFV (146 aa)) form the KARI C-terminal knotted domain. Positions 190, 194, 226, and 230 each coordinate Mg(2+). Substrate is bound at residue S251.

Belongs to the ketol-acid reductoisomerase family. Requires Mg(2+) as cofactor.

It catalyses the reaction (2R)-2,3-dihydroxy-3-methylbutanoate + NADP(+) = (2S)-2-acetolactate + NADPH + H(+). It carries out the reaction (2R,3R)-2,3-dihydroxy-3-methylpentanoate + NADP(+) = (S)-2-ethyl-2-hydroxy-3-oxobutanoate + NADPH + H(+). It functions in the pathway amino-acid biosynthesis; L-isoleucine biosynthesis; L-isoleucine from 2-oxobutanoate: step 2/4. Its pathway is amino-acid biosynthesis; L-valine biosynthesis; L-valine from pyruvate: step 2/4. Involved in the biosynthesis of branched-chain amino acids (BCAA). Catalyzes an alkyl-migration followed by a ketol-acid reduction of (S)-2-acetolactate (S2AL) to yield (R)-2,3-dihydroxy-isovalerate. In the isomerase reaction, S2AL is rearranged via a Mg-dependent methyl migration to produce 3-hydroxy-3-methyl-2-ketobutyrate (HMKB). In the reductase reaction, this 2-ketoacid undergoes a metal-dependent reduction by NADPH to yield (R)-2,3-dihydroxy-isovalerate. The sequence is that of Ketol-acid reductoisomerase (NADP(+)) from Geobacillus sp. (strain WCH70).